We begin with the raw amino-acid sequence, 46 residues long: Protein YpdJ (46 aa).

In terms of biological role, may be involved in H(2) production during fermentative growth. The polypeptide is Protein YpdJ (ypdJ) (Escherichia coli (strain K12)).